The chain runs to 75 residues: MFGLSPAQLIILLVVILLIFGTKKLRNAGSDLGAAVKGFKKAMKEDEKVKDAEFKSIDNETASAKKENIKEKEQA.

A helical transmembrane segment spans residues 1–21 (MFGLSPAQLIILLVVILLIFG).

This sequence belongs to the TatA/E family. As to quaternary structure, the Tat system comprises two distinct complexes: a TatABC complex, containing multiple copies of TatA, TatB and TatC subunits, and a separate TatA complex, containing only TatA subunits. Substrates initially bind to the TatABC complex, which probably triggers association of the separate TatA complex to form the active translocon.

It is found in the cell inner membrane. Its function is as follows. Part of the twin-arginine translocation (Tat) system that transports large folded proteins containing a characteristic twin-arginine motif in their signal peptide across membranes. TatA could form the protein-conducting channel of the Tat system. This Haemophilus influenzae (strain PittEE) protein is Sec-independent protein translocase protein TatA.